The following is an 814-amino-acid chain: Probable G-protein coupled receptor 156 (814 aa).

Residues 1–47 are Extracellular-facing; it reads MEPEINCSELCDSFPGQELDRRPLHDLCKTTITSSHHSSKTISSLSP. N-linked (GlcNAc...) asparagine glycosylation is present at Asn-6. The helical transmembrane segment at 48-68 threads the bilayer; sequence VLLGIVWTFLSCGLLLILFFL. The Cytoplasmic portion of the chain corresponds to 69–86; sequence AFTIHCRKNRIVKMSSPN. A helical membrane pass occupies residues 87-107; the sequence is LNIVTLLGSCLTYSSAYLFGI. At 108 to 118 the chain is on the extracellular side; sequence QDVLVGSSMET. A helical transmembrane segment spans residues 119–139; it reads LIQTRLSMLCIGTSLVFGPIL. Over 140-164 the chain is Cytoplasmic; the sequence is GKSWRLYKVFTQRVPDKRVIIKDLQ. The helical transmembrane segment at 165–185 threads the bilayer; that stretch reads LLGLVAALLMADVILLMTWVL. The Extracellular segment spans residues 186 to 222; sequence TDPIQCLQILSVSMTVTGKDVSCTSTSTHFCASRYSD. The chain crosses the membrane as a helical span at residues 223 to 243; the sequence is VWIALIWGCKGLLLLYGAYLA. The Cytoplasmic segment spans residues 244-257; that stretch reads GLTGHVSSPPVNQS. Residues 258–278 traverse the membrane as a helical segment; that stretch reads LTIMVGVNLLVLAAGLLFVVT. Topologically, residues 279 to 288 are extracellular; sequence RYLHSWPNLV. A helical membrane pass occupies residues 289 to 309; that stretch reads FGLTSGGIFVCTTTINCFIFI. Residues 310 to 814 are Cytoplasmic-facing; the sequence is PQLKQWKAFE…FKDDLKPTLV (505 aa). Positions 354–390 form a coiled coil; that stretch reads EKSSMERLLTEKNAVIESLQEQVNNAKEKIVRLMSAE. Disordered stretches follow at residues 422–545, 557–724, and 769–792; these read AQGP…SSVI, GLGP…PEQW, and SSSDSSDSGTSDTDPEPTGGLASW. The span at 443–454 shows a compositional bias: polar residues; it reads SQCTSGPSSYAQ. The segment covering 468–484 has biased composition (basic and acidic residues); the sequence is GKEEKISDSKDFSDHLD. Residues 486 to 496 are compositionally biased toward polar residues; that stretch reads GCSQKPWTEQS. Basic and acidic residues predominate over residues 523–545; that stretch reads QRQRHLENSEEPPERRSRVSSVI. Over residues 563-581 the composition is skewed to polar residues; the sequence is SLSTAPSCHQQTWKNSAAF. Residues 599–610 are compositionally biased toward basic residues; it reads VRRRRAAQRARS. The span at 639 to 651 shows a compositional bias: polar residues; that stretch reads NGDSPSLAPQTTD. The segment covering 769 to 780 has biased composition (low complexity); it reads SSSDSSDSGTSD.

It belongs to the G-protein coupled receptor 3 family. GABA-B receptor subfamily. Ubiquitous expression both in the CNS and in peripheral tissues. Very high expression in fetal brain and testis relative to expression in other tissues.

The protein resides in the cell membrane. Orphan G-protein coupled receptor involved in the regulation of hair cell orientation in mechanosensory organs of the inner ear. It is required to trigger a 180 degree reversal in hair cell orientation, creating a virtual line of polarity reversal (LPR) across which stereociliary bundles are arranged in opposite orientations. The chain is Probable G-protein coupled receptor 156 (GPR156) from Homo sapiens (Human).